The chain runs to 336 residues: Tryptophan--tRNA ligase 1 (336 aa).

Residues 9 to 11 (KPT) and 17 to 18 (GN) each bind ATP. The short motif at 10–18 (PTGHLTLGN) is the 'HIGH' region element. Residue aspartate 137 coordinates L-tryptophan. Residues 149–151 (GED), valine 188, and 197–201 (KMGKS) contribute to the ATP site. The 'KMSKS' region motif lies at 197-201 (KMGKS).

It belongs to the class-I aminoacyl-tRNA synthetase family. Homodimer.

Its subcellular location is the cytoplasm. The catalysed reaction is tRNA(Trp) + L-tryptophan + ATP = L-tryptophyl-tRNA(Trp) + AMP + diphosphate + H(+). In terms of biological role, catalyzes the attachment of tryptophan to tRNA(Trp). The sequence is that of Tryptophan--tRNA ligase 1 from Streptomyces coelicolor (strain ATCC BAA-471 / A3(2) / M145).